An 89-amino-acid chain; its full sequence is C-C motif chemokine 18 (89 aa).

Positions 1–20 (MKGLAAALLVLVCTMALCSC) are cleaved as a signal peptide. Disulfide bonds link C30–C54 and C31–C70.

The protein belongs to the intercrine beta (chemokine CC) family. Post-translationally, the Cys-30/Cys-54 disulfide bond is required for activity. As to expression, expressed at high levels in lung, lymph nodes, placenta, bone marrow, dendritic cells present in germinal centers and T-cell areas of secondary lymphoid organs and macrophages derived from peripheral blood monocytes. Not expressed by peripheral blood monocytes and a monocyte-to-macrophage differentiation is a prerequisite for expression. Expressed in synovial fluids from patients with rheumatoid and septic arthritis and in ovarian carcinoma ascitic fluid.

It is found in the secreted. In terms of biological role, chemotactic factor that attracts lymphocytes but not monocytes or granulocytes. May be involved in B-cell migration into B-cell follicles in lymph nodes. Attracts naive T-lymphocytes toward dendritic cells and activated macrophages in lymph nodes, has chemotactic activity for naive T-cells, CD4+ and CD8+ T-cells and thus may play a role in both humoral and cell-mediated immunity responses. The chain is C-C motif chemokine 18 (CCL18) from Homo sapiens (Human).